The following is a 213-amino-acid chain: Probable transaldolase (213 aa).

The Schiff-base intermediate with substrate role is filled by K83.

It belongs to the transaldolase family. Type 3B subfamily.

The protein localises to the cytoplasm. The enzyme catalyses D-sedoheptulose 7-phosphate + D-glyceraldehyde 3-phosphate = D-erythrose 4-phosphate + beta-D-fructose 6-phosphate. The protein operates within carbohydrate degradation; pentose phosphate pathway; D-glyceraldehyde 3-phosphate and beta-D-fructose 6-phosphate from D-ribose 5-phosphate and D-xylulose 5-phosphate (non-oxidative stage): step 2/3. Transaldolase is important for the balance of metabolites in the pentose-phosphate pathway. In Desulfitobacterium hafniense (strain DSM 10664 / DCB-2), this protein is Probable transaldolase.